We begin with the raw amino-acid sequence, 90 residues long: Auxin-responsive protein SAUR19 (90 aa).

The protein belongs to the ARG7 family. In terms of assembly, interacts with and inhibits PP2C-D subfamily of type 2C phosphatases such as PP2C67/PP2C-D1, PP2C64/PP2C-D5 and PP2C46/PP2C-D6.

The protein localises to the cell membrane. Provide a mechanistic link between auxin and plasma membrane H(+)-ATPases (PM H(+)-ATPases, e.g. AHA1 and AHA2), and triggers PM H(+)-ATPases activity by promoting phosphorylation of their C-terminal autoinhibitory domain as a result of PP2C-D subfamily of type 2C phosphatases inhibition, thus leading to the acidification of the apoplast and the facilitation of solutes and water uptake to drive cell expansion. Prevents the apical hook maintenance of etiolated seedlings. Functions as positive effectors of cell expansion through modulation of auxin transport. In Arabidopsis thaliana (Mouse-ear cress), this protein is Auxin-responsive protein SAUR19.